A 254-amino-acid polypeptide reads, in one-letter code: MQAQEANALLLSRMEALEWFKKFTVWLRVYAIFIFQLAFSFGLGSVFWLGFPQNRNFCVENYSFFLTVLVPIVCMFITYTLGNEHPSNATVLFIYLLANSLTAAIFQMCSESRVLVGSYVMTLALFISFTGLAFLGGRDRRRWKCISCVYVVMLLSFLTLALLSDADWLQKIVVTLCAFSISFFLGILAYDSLMVIFFCPPNQCIRHAVCLYLDSMAIFLTLLLMLSGPRWISLSDGAPLDNGTLTAASTTGKS.

The next 7 helical transmembrane spans lie at 31-51 (AIFI…WLGF), 62-82 (YSFF…YTLG), 89-109 (ATVL…FQMC), 114-134 (VLVG…GLAF), 143-163 (WKCI…LALL), 178-198 (AFSI…VIFF), and 208-228 (AVCL…MLSG).

It localises to the host membrane. The chain is Membrane protein US20 (US20) from Homo sapiens (Human).